An 863-amino-acid chain; its full sequence is Potassium/sodium hyperpolarization-activated cyclic nucleotide-gated channel 2 (863 aa).

Positions 1 to 10 (MDARGGGGRP) are enriched in gly residues. The tract at residues 1–131 (MDARGGGGRP…AGPAGEPRGS (131 aa)) is disordered. At 1–188 (MDARGGGGRP…PYSDFRFYWD (188 aa)) the chain is on the cytoplasmic side. Residues 17–47 (TPAPGPPPPPPPPAPPQPQPPPAPPPNPTTP) are compositionally biased toward pro residues. The segment covering 106-128 (GAASGPAAAEEAGSEEAGPAGEP) has biased composition (low complexity). Ser-119 and Ser-134 each carry phosphoserine. The tract at residues 131 to 182 (SQASFLQRQFGALLQPGVNKFSLRMFGSQKAVEREQERVKSAGAWIIHPYSD) is involved in subunit assembly. Residues 189–209 (FTMLLFMVGNLIIIPVGITFF) form a helical membrane-spanning segment. The Extracellular segment spans residues 210–213 (KDET). The helical transmembrane segment at 214-234 (TAPWIVFNVVSDTFFLMDLVL) threads the bilayer. Over 235 to 261 (NFRTGIVIEDNTEIILDPEKIKKKYLR) the chain is Cytoplasmic. The helical transmembrane segment at 262-282 (TWFVVDFVSSIPVDYIFLIVE) threads the bilayer. The Extracellular portion of the chain corresponds to 283-290 (KGIDSEVY). A helical; Voltage-sensor membrane pass occupies residues 291-311 (KTARALRIVRFTKILSLLRLL). Residues 312–342 (RLSRLIRYIHQWEEIFHMTYDLASAVMRICN) lie on the Cytoplasmic side of the membrane. The helical transmembrane segment at 343-363 (LISMMLLLCHWDGCLQFLVPM) threads the bilayer. Residues 364 to 386 (LQDFPSDCWVSINNMVNHSWSEL) lie on the Extracellular side of the membrane. Asn-380 carries an N-linked (GlcNAc...) asparagine glycan. Positions 387 to 408 (YSFALFKAMSHMLCIGYGRQAP) form an intramembrane region, pore-forming. Over 409–413 (ESMTD) the chain is Extracellular. Residues 414–434 (IWLTMLSMIVGATCYAMFIGH) traverse the membrane as a helical segment. The Cytoplasmic portion of the chain corresponds to 435–863 (ATALIQSLDS…SARSRLSSNL (429 aa)). Residues Gly-581, Glu-582, Cys-584, Arg-591, Thr-592, and Arg-632 each coordinate 3',5'-cyclic AMP. Ser-641 carries the post-translational modification Phosphoserine; by PKG/PRKG2. Residue Ser-726 is modified to Phosphoserine. Arg-728 is modified (omega-N-methylarginine). Residues 730-863 (VRRAPPGPLP…SARSRLSSNL (134 aa)) form a disordered region. Pro residues predominate over residues 734 to 755 (PPGPLPPAASPGPPAASPPAAP). 3 positions are modified to phosphoserine: Ser-743, Ser-750, and Ser-757. 2 stretches are compositionally biased toward low complexity: residues 756–765 (SSPRAPRTSP) and 778–834 (PALP…AAPS). 3 positions are modified to phosphoserine: Ser-840, Ser-842, and Ser-847.

It belongs to the potassium channel HCN family. In terms of assembly, homotetramer. The channel is composed of a homo- or heterotetrameric complex of pore-forming subunits. Heterotetramer with HCN1. Forms an obligate 4:4 complex with accessory subunit PEX5L. Interacts with KCNE2. In terms of processing, phosphorylation at Ser-641 by PRKG2 shifts the voltage-dependence to more negative voltages, hence counteracting the stimulatory effect of cGMP on gating. Post-translationally, N-glycosylated; required for cell surface trafficking of HCN2. S-palmitoylated. Highly expressed in neonatal and adult ventricle and in brain. Highly expressed in the pyramidal layer in hippocampus, in anterior dorsal nucleus in thalamus, in the mammillary nucleus in hypothalamus, in red nucleus, in trigeminal mesencephalic, spinal and principal nuclei, in cochlear and trapezoid nuclei and in the dorsal tegemental nucleus.

It is found in the cell membrane. The enzyme catalyses Na(+)(in) = Na(+)(out). It carries out the reaction K(+)(in) = K(+)(out). It catalyses the reaction NH4(+)(in) = NH4(+)(out). With respect to regulation, activated by cAMP, and at 10-100 times higher concentrations, also by cGMP. cAMP binding causes a conformation change that leads to the assembly of an active tetramer and channel opening. In the absence of cAMP, the C-terminal region is thought to exert a tonic inhibition on the pore when HCN2 is in a non-tetrameric form. Channel activity is modulated by intracellular chloride ions and pH; acidic pH shifts the activation to more negative voltages. Phosphatidylinositol-4,5- bisphosphate (PIP(2)) acts as a ligand that allosterically opens HCN2 by shifting voltage-dependent channel activation toward depolarized potentials. Inhibited by extracellular cesium ions. Its function is as follows. Hyperpolarization-activated ion channel exhibiting weak selectivity for potassium over sodium ions. Contributes to the native pacemaker currents in heart (If) and in neurons (Ih). Can also transport ammonium in the distal nephron. Involved in the initiation of neuropathic pain in sensory neurons. Produces a large instantaneous current. This chain is Potassium/sodium hyperpolarization-activated cyclic nucleotide-gated channel 2 (Hcn2), found in Rattus norvegicus (Rat).